The chain runs to 109 residues: METKAILKGVRLSDQKGRLVADQIRGKKVDAALNLLQFSPKKGAAIIKRVLESAIANAEHNDGADIDELFVKTIYVEKGPILKRFTARAKGRGDRISKQSCHIYVTVGN.

This sequence belongs to the universal ribosomal protein uL22 family. Part of the 50S ribosomal subunit.

In terms of biological role, this protein binds specifically to 23S rRNA; its binding is stimulated by other ribosomal proteins, e.g. L4, L17, and L20. It is important during the early stages of 50S assembly. It makes multiple contacts with different domains of the 23S rRNA in the assembled 50S subunit and ribosome. Functionally, the globular domain of the protein is located near the polypeptide exit tunnel on the outside of the subunit, while an extended beta-hairpin is found that lines the wall of the exit tunnel in the center of the 70S ribosome. The protein is Large ribosomal subunit protein uL22 of Herminiimonas arsenicoxydans.